Consider the following 464-residue polypeptide: Asparagine--tRNA ligase (464 aa).

Belongs to the class-II aminoacyl-tRNA synthetase family. In terms of assembly, homodimer.

The protein localises to the cytoplasm. It carries out the reaction tRNA(Asn) + L-asparagine + ATP = L-asparaginyl-tRNA(Asn) + AMP + diphosphate + H(+). The sequence is that of Asparagine--tRNA ligase from Clostridium botulinum (strain Eklund 17B / Type B).